The following is a 561-amino-acid chain: Excitatory amino acid transporter 4 (561 aa).

The Cytoplasmic segment spans residues 1–52 (MSSHGNSLFLRESGAGGGCLQGLQDSLQQRALRTRLRLQTMTREHVRRFLRR). Serine 2 is modified (phosphoserine). 3 helical membrane-spanning segments follow: residues 53 to 73 (NAFI…AFAL), 96 to 116 (MLQM…MASL), and 130 to 150 (VYYM…VTII). N-linked (GlcNAc...) asparagine glycosylation is found at asparagine 213, asparagine 229, and asparagine 236. 3 helical membrane passes run 259–282 (SANG…IGGM), 292–319 (FFDS…LFLI), and 341–362 (LTVI…YFLV). An intramembrane region (discontinuously helical) is located at residues 368 to 398 (FPFIGGMLQALITAMGTSSSSATLPITFRCL). 385 to 387 (SSS) contacts L-aspartate. The helical transmembrane segment at 408–434 (ITRFVLPVGATVNMDGTALYEALAAIF) threads the bilayer. Na(+) is bound by residues glycine 416, threonine 418, and asparagine 420. L-aspartate is bound by residues threonine 424, 465 to 469 (IPQAG), aspartate 498, and asparagine 505. An intramembrane region (discontinuously helical) is located at residues 448–481 (ITTISITATAASVGAAGIPQAGLVTMVIVLTSVG). Residues 495–516 (WFLDRLRTMTNVLGDSIGAAVI) traverse the membrane as a helical segment. Residues asparagine 505 and aspartate 509 each contribute to the Na(+) site.

It belongs to the dicarboxylate/amino acid:cation symporter (DAACS) (TC 2.A.23) family. SLC1A6 subfamily. As to quaternary structure, homotrimer. As to expression, brain specific.

It localises to the cell membrane. The enzyme catalyses K(+)(in) + L-glutamate(out) + 3 Na(+)(out) + H(+)(out) = K(+)(out) + L-glutamate(in) + 3 Na(+)(in) + H(+)(in). The catalysed reaction is K(+)(in) + L-aspartate(out) + 3 Na(+)(out) + H(+)(out) = K(+)(out) + L-aspartate(in) + 3 Na(+)(in) + H(+)(in). It carries out the reaction D-aspartate(out) + K(+)(in) + 3 Na(+)(out) + H(+)(out) = D-aspartate(in) + K(+)(out) + 3 Na(+)(in) + H(+)(in). Sodium-dependent, high-affinity amino acid transporter that mediates the uptake of L-glutamate and also L-aspartate and D-aspartate. Functions as a symporter that transports one amino acid molecule together with two or three Na(+) ions and one proton, in parallel with the counter-transport of one K(+) ion. Mediates Cl(-) flux that is not coupled to amino acid transport; this avoids the accumulation of negative charges due to aspartate and Na(+) symport. Plays a redundant role in the rapid removal of released glutamate from the synaptic cleft, which is essential for terminating the postsynaptic action of glutamate. The polypeptide is Excitatory amino acid transporter 4 (Slc1a6) (Mus musculus (Mouse)).